Here is a 179-residue protein sequence, read N- to C-terminus: Probable WRKY transcription factor 24 (179 aa).

The WRKY DNA-binding region spans 92 to 157; it reads SDDDVLDDGY…YEGVHNHPCE (66 aa).

This sequence belongs to the WRKY group II-c family.

It is found in the nucleus. Its function is as follows. Transcription factor. Interacts specifically with the W box (5'-(T)TGAC[CT]-3'), a frequently occurring elicitor-responsive cis-acting element. The sequence is that of Probable WRKY transcription factor 24 (WRKY24) from Arabidopsis thaliana (Mouse-ear cress).